Consider the following 193-residue polypeptide: Ion-translocating oxidoreductase complex subunit A (193 aa).

A run of 6 helical transmembrane segments spans residues 5-25, 39-59, 62-82, 102-122, 134-154, and 171-191; these read FLLFVGTVLVNNFVLVKFLGL, IGMGFATTFVMTLASVCSWLV, FILLPLDLIYLRTLSFILVIA, LLGIFLPLITTNCAVLGVALL, AIYGFGAAAGFSLVMVLFAAI, and SIGLITAGLMSLAFMGFSGLV.

Belongs to the NqrDE/RnfAE family. In terms of assembly, the complex is composed of six subunits: RnfA, RnfB, RnfC, RnfD, RnfE and RnfG.

It localises to the cell inner membrane. Its function is as follows. Part of a membrane-bound complex that couples electron transfer with translocation of ions across the membrane. The chain is Ion-translocating oxidoreductase complex subunit A from Photorhabdus laumondii subsp. laumondii (strain DSM 15139 / CIP 105565 / TT01) (Photorhabdus luminescens subsp. laumondii).